The following is a 166-amino-acid chain: Phosphopantetheine adenylyltransferase (166 aa).

A substrate-binding site is contributed by serine 11. ATP is bound by residues 11–12 and histidine 19; that span reads SF. Residues lysine 43, valine 80, and arginine 94 each coordinate substrate. ATP is bound by residues 95 to 97, glutamate 105, and 130 to 136; these read GLR and VRTVTAT.

It belongs to the bacterial CoaD family. As to quaternary structure, homohexamer. Mg(2+) is required as a cofactor.

The protein resides in the cytoplasm. It catalyses the reaction (R)-4'-phosphopantetheine + ATP + H(+) = 3'-dephospho-CoA + diphosphate. It participates in cofactor biosynthesis; coenzyme A biosynthesis; CoA from (R)-pantothenate: step 4/5. In terms of biological role, reversibly transfers an adenylyl group from ATP to 4'-phosphopantetheine, yielding dephospho-CoA (dPCoA) and pyrophosphate. The protein is Phosphopantetheine adenylyltransferase of Chelativorans sp. (strain BNC1).